A 294-amino-acid chain; its full sequence is Bifunctional protein FolD (294 aa).

NADP(+) contacts are provided by residues 175-177 (GVS) and Ile-243.

The protein belongs to the tetrahydrofolate dehydrogenase/cyclohydrolase family. As to quaternary structure, homodimer.

It catalyses the reaction (6R)-5,10-methylene-5,6,7,8-tetrahydrofolate + NADP(+) = (6R)-5,10-methenyltetrahydrofolate + NADPH. The enzyme catalyses (6R)-5,10-methenyltetrahydrofolate + H2O = (6R)-10-formyltetrahydrofolate + H(+). Its pathway is one-carbon metabolism; tetrahydrofolate interconversion. Functionally, catalyzes the oxidation of 5,10-methylenetetrahydrofolate to 5,10-methenyltetrahydrofolate and then the hydrolysis of 5,10-methenyltetrahydrofolate to 10-formyltetrahydrofolate. This chain is Bifunctional protein FolD, found in Xanthomonas campestris pv. campestris (strain 8004).